Consider the following 154-residue polypeptide: Transcription antitermination protein NusB (154 aa).

This sequence belongs to the NusB family.

Involved in transcription antitermination. Required for transcription of ribosomal RNA (rRNA) genes. Binds specifically to the boxA antiterminator sequence of the ribosomal RNA (rrn) operons. This chain is Transcription antitermination protein NusB, found in Oleidesulfovibrio alaskensis (strain ATCC BAA-1058 / DSM 17464 / G20) (Desulfovibrio alaskensis).